Consider the following 305-residue polypeptide: MSRELAPLLLLLLSIHSALAMRICSFNVRSFGESKQEDKNAMDVIVKVIKRCDIILVMEIKDSNNRICPILMEKLNRNSRRGITYNYVISSRLGRNTYKEQYAFLYKEKLVSVKRSYHYHDYQDGDADVFSREPFVVWFQSPHTAVKDFVIIPLHTTPETSVKEIDELVEVYTDVKHRWKAENFIFMGDFNAGCSYVPKKAWKNIRLRTDPRFVWLIGDQEDTTVKKSTNCAYDRIVLRGQEIVSSVVPKSNSVFDFQKAYKLTEEEALDVSDHFPVEFKLQSSRAFTNSKKSVTLRKKTKSKRS.

Positions 1-20 are cleaved as a signal peptide; sequence MSRELAPLLLLLLSIHSALA. Positions 35–51 match the Bipartite nuclear localization signal motif; the sequence is KQEDKNAMDVIVKVIKR. Catalysis depends on residues glutamate 100 and histidine 155. A disulfide bridge connects residues cysteine 194 and cysteine 231. The tract at residues 284-305 is not required for free DNA-nuclease activity but required for activity towards liposome-coated DNA; the sequence is SRAFTNSKKSVTLRKKTKSKRS. The Nuclear localization signal motif lies at 296–304; it reads LRKKTKSKR.

It belongs to the DNase I family. Ca(2+) serves as cofactor. Mg(2+) is required as a cofactor. Poly-ADP-ribosylated by PARP1. ADP-ribosylation negatively regulates enzymatic activity during apoptosis. As to expression, liver and spleen.

It is found in the nucleus. The protein resides in the endoplasmic reticulum. It localises to the secreted. Inhibited by zinc. Its function is as follows. Has DNA hydrolytic activity. Is capable of both single- and double-stranded DNA cleavage, producing DNA fragments with 3'-OH ends. Can cleave chromatin to nucleosomal units and cleaves nucleosomal and liposome-coated DNA. Acts in internucleosomal DNA fragmentation (INDF) during apoptosis and necrosis. The role in apoptosis includes myogenic and neuronal differentiation, and BCR-mediated clonal deletion of self-reactive B cells. Is active on chromatin in apoptotic cell-derived membrane-coated microparticles and thus suppresses anti-DNA autoimmunity. Together with DNASE1, plays a key role in degrading neutrophil extracellular traps (NETs). NETs are mainly composed of DNA fibers and are released by neutrophils to bind pathogens during inflammation. Degradation of intravascular NETs by DNASE1 and DNASE1L3 is required to prevent formation of clots that obstruct blood vessels and cause organ damage following inflammation. This is Deoxyribonuclease gamma from Homo sapiens (Human).